We begin with the raw amino-acid sequence, 932 residues long: UPF0182 protein Amet_0022 (932 aa).

7 helical membrane-spanning segments follow: residues 14 to 34 (VIIG…SEIL), 60 to 80 (LQIG…YLIG), 104 to 124 (ILIL…AGSL), 166 to 186 (TSIL…MFLI), 208 to 228 (LLQI…LVLA), 256 to 276 (VTLW…TGVV), and 286 to 306 (LLLI…VISL).

The protein belongs to the UPF0182 family.

The protein localises to the cell membrane. The polypeptide is UPF0182 protein Amet_0022 (Alkaliphilus metalliredigens (strain QYMF)).